Consider the following 347-residue polypeptide: Protein-arginine kinase (347 aa).

Residues 22–247 (LVVSTRIRLA…EQVIQAERHA (226 aa)) enclose the Phosphagen kinase C-terminal domain. ATP-binding positions include 25-29 (STRIR), His-85, Arg-118, 169-173 (RASVM), and 200-205 (RGRYGE). Residues 330-335 (RDRERA) carry the RDXXRA motif of the pArg binding pocket involved in allosteric regulation motif.

It belongs to the ATP:guanido phosphotransferase family.

The enzyme catalyses L-arginyl-[protein] + ATP = N(omega)-phospho-L-arginyl-[protein] + ADP + H(+). With respect to regulation, appears to be allosterically activated by the binding of pArg-containing polypeptides to the pArg-binding pocket localized in the C-terminal domain of McsB. Functionally, catalyzes the specific phosphorylation of arginine residues in proteins. The polypeptide is Protein-arginine kinase (Exiguobacterium sp. (strain ATCC BAA-1283 / AT1b)).